The sequence spans 456 residues: tRNA modification GTPase MnmE (456 aa).

3 residues coordinate (6S)-5-formyl-5,6,7,8-tetrahydrofolate: Arg-24, Glu-81, and Lys-120. Residues 216–379 (GMTVVIAGRP…LREHLKACMG (164 aa)) enclose the TrmE-type G domain. Asn-226 contributes to the K(+) binding site. Residues 226-231 (NAGKSS), 245-251 (TEIAGTT), 270-273 (DTAG), 335-338 (NKAD), and 359-361 (SAR) each bind GTP. Ser-230 lines the Mg(2+) pocket. K(+)-binding residues include Thr-245, Ile-247, and Thr-250. Thr-251 contributes to the Mg(2+) binding site. Lys-456 is a binding site for (6S)-5-formyl-5,6,7,8-tetrahydrofolate.

The protein belongs to the TRAFAC class TrmE-Era-EngA-EngB-Septin-like GTPase superfamily. TrmE GTPase family. As to quaternary structure, homodimer. Heterotetramer of two MnmE and two MnmG subunits. It depends on K(+) as a cofactor.

The protein resides in the cytoplasm. Exhibits a very high intrinsic GTPase hydrolysis rate. Involved in the addition of a carboxymethylaminomethyl (cmnm) group at the wobble position (U34) of certain tRNAs, forming tRNA-cmnm(5)s(2)U34. The chain is tRNA modification GTPase MnmE from Pseudomonas savastanoi pv. phaseolicola (strain 1448A / Race 6) (Pseudomonas syringae pv. phaseolicola (strain 1448A / Race 6)).